The primary structure comprises 159 residues: Phosphopantetheine adenylyltransferase (159 aa).

Thr-10 provides a ligand contact to substrate. ATP contacts are provided by residues 10–11 (TF) and His-18. Substrate contacts are provided by Lys-42, Met-74, and Arg-88. Residues 89-91 (GLR), Glu-99, and 124-130 (WSFISSS) contribute to the ATP site.

Belongs to the bacterial CoaD family. In terms of assembly, homohexamer. Mg(2+) serves as cofactor.

It localises to the cytoplasm. The enzyme catalyses (R)-4'-phosphopantetheine + ATP + H(+) = 3'-dephospho-CoA + diphosphate. The protein operates within cofactor biosynthesis; coenzyme A biosynthesis; CoA from (R)-pantothenate: step 4/5. Functionally, reversibly transfers an adenylyl group from ATP to 4'-phosphopantetheine, yielding dephospho-CoA (dPCoA) and pyrophosphate. The sequence is that of Phosphopantetheine adenylyltransferase from Escherichia coli (strain SMS-3-5 / SECEC).